The sequence spans 339 residues: D-erythrose-4-phosphate dehydrogenase (339 aa).

NAD(+)-binding positions include 12-13 (RI) and Arg-81. Substrate contacts are provided by residues 154–156 (SCT), Arg-200, 213–214 (TR), and Arg-236. The Nucleophile role is filled by Cys-155. Asn-318 serves as a coordination point for NAD(+).

Belongs to the glyceraldehyde-3-phosphate dehydrogenase family. Epd subfamily. In terms of assembly, homotetramer.

It localises to the cytoplasm. It catalyses the reaction D-erythrose 4-phosphate + NAD(+) + H2O = 4-phospho-D-erythronate + NADH + 2 H(+). It participates in cofactor biosynthesis; pyridoxine 5'-phosphate biosynthesis; pyridoxine 5'-phosphate from D-erythrose 4-phosphate: step 1/5. In terms of biological role, catalyzes the NAD-dependent conversion of D-erythrose 4-phosphate to 4-phosphoerythronate. The protein is D-erythrose-4-phosphate dehydrogenase of Cronobacter sakazakii (strain ATCC BAA-894) (Enterobacter sakazakii).